We begin with the raw amino-acid sequence, 109 residues long: Biphenyl dioxygenase system ferredoxin subunit (109 aa).

The Rieske domain maps to 4–100 (TRVCDRRDVP…IRIEDNDVLV (97 aa)). The [2Fe-2S] cluster site is built by C43, H45, C63, and H66.

The protein belongs to the bacterial ring-hydroxylating dioxygenase ferredoxin component family. As to quaternary structure, this dioxygenase system consists of four proteins: the two subunits of the hydroxylase component (BphA and BphE), a ferredoxin (BphF) and a ferredoxin reductase (BphG).

In terms of biological role, this protein seems to be a 2Fe-2S ferredoxin. This chain is Biphenyl dioxygenase system ferredoxin subunit (bphF), found in Paraburkholderia xenovorans (strain LB400).